Reading from the N-terminus, the 460-residue chain is Cysteine--tRNA ligase (460 aa).

Zn(2+) is bound at residue C27. Positions 29 to 39 (PTVYDLIHVGN) match the 'HIGH' region motif. Residues C207, H232, and E236 each contribute to the Zn(2+) site. Positions 264–268 (KMSKS) match the 'KMSKS' region motif. Residue K267 participates in ATP binding.

This sequence belongs to the class-I aminoacyl-tRNA synthetase family. In terms of assembly, monomer. The cofactor is Zn(2+).

It is found in the cytoplasm. The catalysed reaction is tRNA(Cys) + L-cysteine + ATP = L-cysteinyl-tRNA(Cys) + AMP + diphosphate. The polypeptide is Cysteine--tRNA ligase (cysS) (Thermotoga maritima (strain ATCC 43589 / DSM 3109 / JCM 10099 / NBRC 100826 / MSB8)).